Here is a 272-residue protein sequence, read N- to C-terminus: Small ribosomal subunit protein uS3 (272 aa).

A KH type-2 domain is found at 43-111; that stretch reads IRELMTTGME…QIQLNILEVK (69 aa). The interval 218-272 is disordered; the sequence is AKEAAQPSGRGRGGERRGGGERRRRNDRAERAPRQENAGAGAETPAAAPAEGGNA. Residues 229–238 are compositionally biased toward basic and acidic residues; that stretch reads RGGERRGGGE. The span at 253–272 shows a compositional bias: low complexity; sequence ENAGAGAETPAAAPAEGGNA.

Belongs to the universal ribosomal protein uS3 family. As to quaternary structure, part of the 30S ribosomal subunit. Forms a tight complex with proteins S10 and S14.

Its function is as follows. Binds the lower part of the 30S subunit head. Binds mRNA in the 70S ribosome, positioning it for translation. This chain is Small ribosomal subunit protein uS3, found in Micrococcus luteus (strain ATCC 4698 / DSM 20030 / JCM 1464 / CCM 169 / CCUG 5858 / IAM 1056 / NBRC 3333 / NCIMB 9278 / NCTC 2665 / VKM Ac-2230) (Micrococcus lysodeikticus).